The sequence spans 219 residues: Leucyl/phenylalanyl-tRNA--protein transferase (219 aa).

This sequence belongs to the L/F-transferase family.

The protein resides in the cytoplasm. The catalysed reaction is N-terminal L-lysyl-[protein] + L-leucyl-tRNA(Leu) = N-terminal L-leucyl-L-lysyl-[protein] + tRNA(Leu) + H(+). The enzyme catalyses N-terminal L-arginyl-[protein] + L-leucyl-tRNA(Leu) = N-terminal L-leucyl-L-arginyl-[protein] + tRNA(Leu) + H(+). It carries out the reaction L-phenylalanyl-tRNA(Phe) + an N-terminal L-alpha-aminoacyl-[protein] = an N-terminal L-phenylalanyl-L-alpha-aminoacyl-[protein] + tRNA(Phe). Its function is as follows. Functions in the N-end rule pathway of protein degradation where it conjugates Leu, Phe and, less efficiently, Met from aminoacyl-tRNAs to the N-termini of proteins containing an N-terminal arginine or lysine. This Leptospira interrogans serogroup Icterohaemorrhagiae serovar copenhageni (strain Fiocruz L1-130) protein is Leucyl/phenylalanyl-tRNA--protein transferase.